Here is a 186-residue protein sequence, read N- to C-terminus: Ribosome-recycling factor (186 aa).

Belongs to the RRF family.

The protein localises to the cytoplasm. Its function is as follows. Responsible for the release of ribosomes from messenger RNA at the termination of protein biosynthesis. May increase the efficiency of translation by recycling ribosomes from one round of translation to another. This is Ribosome-recycling factor from Acidovorax ebreus (strain TPSY) (Diaphorobacter sp. (strain TPSY)).